The sequence spans 246 residues: 3-oxoacyl-[acyl-carrier-protein] reductase FabG (246 aa).

NADP(+) contacts are provided by residues 11–14 (GASR), 62–63 (NV), and Asn89. Ser141 contributes to the substrate binding site. Tyr154 functions as the Proton acceptor in the catalytic mechanism. NADP(+) is bound by residues 154 to 158 (YVATK) and Ile187.

The protein belongs to the short-chain dehydrogenases/reductases (SDR) family. In terms of assembly, homotetramer.

It carries out the reaction a (3R)-hydroxyacyl-[ACP] + NADP(+) = a 3-oxoacyl-[ACP] + NADPH + H(+). Its pathway is lipid metabolism; fatty acid biosynthesis. In terms of biological role, catalyzes the NADPH-dependent reduction of beta-ketoacyl-ACP substrates to beta-hydroxyacyl-ACP products, the first reductive step in the elongation cycle of fatty acid biosynthesis. In Staphylococcus aureus (strain Mu50 / ATCC 700699), this protein is 3-oxoacyl-[acyl-carrier-protein] reductase FabG (fabG).